A 646-amino-acid chain; its full sequence is MRSSSAGTPFTAQYACEICRERKVRCDRALPKCRRCDRLNQPCSYNQAHQRRTRDEQLKQLQERLAKTEAQLAMNTTAAPLSVRSQSRSEGTELASSTRWIGTPDSFTPNSCSRRSSQYQLPTTSTSQSQLGSVLGTTAANTPMDLDNIRGMSATSGMSTNGSSLFDSDLFTSFTEGADSNMTFAWTNQPLMALEPLDNMLLNRPQSAPPNGSEEDLSPTDLSLLHNHYFESVYFSFPFINRDRFTAEKTGSRSPATTALVYAVALAGCTRSLQDHNRQSTCYGLARNYAERCEQEDHLNDLNFLQALLLIGRFEAMNRKLERSGLTLGRAAMLCKLLKLHQMDKSEHSQGMQNRETQSGPRLALPHTKDPVLLEERRRTFWGLYILQSYVRTRTGWEFQLEDTKNLQINLPSPGLLRSDLEPLKMPSLLNISTEPAPEITSYAGCVLMVELALRCFDNGQKRDTPGFWDDYCALVKKTDDLFKTLKRHLNATSIREDPVAFSLYLNLRATEIFSHDSAITKNEEQGLPPLMVAESQRRATTAAFQICSAVGLNLPSPWKADSDIIMLQAIFIAWPLTMALKALYRELVRGGIRETVNGVVASIRLLFAALDHIEESDGHWHQCVTNVEAKLQEWDEKNSFDSLAL.

Residues 16–43 (CEICRERKVRCDRALPKCRRCDRLNQPC) constitute a DNA-binding region (zn(2)-C6 fungal-type). 2 disordered regions span residues 76-130 (TTAA…SQSQ) and 345-366 (KSEHSQGMQNRETQSGPRLALP). A compositionally biased stretch (polar residues) spans 349–360 (SQGMQNRETQSG).

It localises to the nucleus. Transcription factor that positively regulates the expression of the gene cluster that mediates the biosynthesis of depudecin, a highly oxidized eleven-carbon linear polyketide that acts as a histone deacetylase (HDAC) inhibitor and makes a small contribution to pathogenesis. This Alternaria brassicicola (Dark leaf spot agent) protein is Depudecin biosynthesis cluster-specific transcription activator DEP6.